Here is a 357-residue protein sequence, read N- to C-terminus: MPTGGKSTLTQFLIEERRKHPAATGELNALITDVSLACKAISRKVAFGGLAGVLGSAGSGNVQGEEQKTLDVLSNTMFLRATEWGGHVAGMVSEELEAPYTLPPQYARGKYLLMFDPLDGSSNIDVNVTVGSIFAIHRAPQPRQDPQPQDYLQPGTTMVCGGYAIYGPSTMLVLTLGDGTHAFTLDPQLGEWVLSHPNLRIPEKTREFAINASNSRFWEPAVKRYVDECLAGSTGPRGTDFNMRWIASLVAETHRILMRGGVFLYPRDSKDPNKAGRLRLLYEANPISFLIEQAGGMASTGRKRLLEVQPEDIHQRIGFVFGSTEEVARIEAYHRDEPPTPYNSPLFGKRGLFAEAG.

Mg(2+) contacts are provided by glutamate 94, aspartate 116, leucine 118, and aspartate 119. Substrate is bound by residues 119 to 122 and asparagine 211; that span reads DGSS. Position 283 (glutamate 283) interacts with Mg(2+).

This sequence belongs to the FBPase class 1 family. In terms of assembly, homotetramer. Requires Mg(2+) as cofactor.

It is found in the cytoplasm. It carries out the reaction beta-D-fructose 1,6-bisphosphate + H2O = beta-D-fructose 6-phosphate + phosphate. The protein operates within carbohydrate biosynthesis; Calvin cycle. In Methylibium petroleiphilum (strain ATCC BAA-1232 / LMG 22953 / PM1), this protein is Fructose-1,6-bisphosphatase class 1 3.